Consider the following 262-residue polypeptide: tRNA pseudouridine synthase A (262 aa).

Catalysis depends on D51, which acts as the Nucleophile. Residue Y109 participates in substrate binding.

The protein belongs to the tRNA pseudouridine synthase TruA family. In terms of assembly, homodimer.

The catalysed reaction is uridine(38/39/40) in tRNA = pseudouridine(38/39/40) in tRNA. Its function is as follows. Formation of pseudouridine at positions 38, 39 and 40 in the anticodon stem and loop of transfer RNAs. The chain is tRNA pseudouridine synthase A from Glaesserella parasuis serovar 5 (strain SH0165) (Haemophilus parasuis).